The chain runs to 3390 residues: MNNQRKKTGKPSINMLKRVRNRVSTGSQLAKRFSRGLLNGQGPMKLVMAFIAFLRFLAIPPTAGVLARWGTFKKSGAIKVLKGFKKEISNMLSIINKRKKTSLCLMMMLPATLAFHLTSRDGEPRMIVGKNERGKSLLFKTASGINMCTLIAMDLGEMCDDTVTYKCPHITEVEPEDIDCWCNLTSTWVTYGTCNQAGEHRRDKRSVALAPHVGMGLDTRTQTWMSAEGAWRQVEKVETWALRHPGFTILALFLAHYIGTSLTQKVVIFILLMLVTPSMTMRCVGVGNRDFVEGLSGATWVDVVLEHGGCVTTMAKNKPTLDIELQKTEATQLATLRKLCIEGKITNITTDSRCPTQGEAILPEEQDQNYVCKHTYVDRGWGNGCGLFGKGSLVTCAKFQCLESIEGKVVQHENLKYTVIITVHTGDQHQVGNETQGVTAEITSQASTAEAILPEYGTLGLECSPRTGLDFNEMILLTMKNKAWMVHRQWFFDLPLPWTSGATTKTPTWNRKELLVTFKNAHAKKQEVVVLGSQEGAMHTALTGATEIQTLGGTSIFAGHLKCRLKMDKLELKGMSYAMCLNTFVLKKEVSETQHGTILIKVEYKGEDAPCKIPFSTEDGQGKAHNGRLITANPVVTKKEEPVNIEAEPPFGESNIVIGIGDKALKINWYRKGSSIGKMFEATARGARRMAILGDTAWDFGSVGGVLNSLGKMVHQIFGSAYTALFSGVSWIMKIGIGVLLTWIGLNSKNTSMSFSCIAIGIITLYLGVVVQADMGCVINWKGKELKCGSGIFVTNEVHTWTEQYKFQADSPKRLATAIAGAWENGVCGIRSTTRMENLLWKQIANELNYILWENNIKLTVVVGDITGVLEQGKRTLTPQPMELKYSWKTWGKAKIVTAETQNSSFIIDGPSTPECPSASRAWNVWEVEDYGFGVFTTNIWLKLREVYTQLCDHRLMSAAVKDERAVHADMGYWIESQKNGSWKLEKASLIEVKTCTWPKSHTLWSNGVLESDMIIPKSLAGPISQHNHRPGYHTQTAGPWHLGKLELDFNYCEGTTVVISENCGTRGPSLRTTTVSGKLIHEWCCRSCTLPPLRYMGEDGCWYGMEIRPINEKEENMVKSLASAGSGKVDNFTMGVLCLAILFEEVMRGKFGKKHMIAGVLFTFVLLLSGQITWRDMAHTLIMIGSNASDRMGMGVTYLALIATFKIQPFLALGFFLRKLTSRENLLLGVGLAMAATLRLPEDIEQMANGIALGLMALKLITQFETYQLWTALVSLTCSNTIFTLTVAWRTATLILAGISLLPVCQSSSMRKTDWLPMTVAAMGVPPLPLFIFSLKDTLKRRSWPLNEGVMAVGLVSILASSLLRNDVPMAGPLVAGGLLIACYVITGTSADLTVEKAADVTWEEEAEQTGVSHNLMITVDDDGTMRIKDDETENILTVLLKTALLIVSGIFPCSIPATLLVWHTWQKQTQRSGVLWDVPSPPETQKAELEEGVYRIKQQGIFGKTQVGVGVQKEGVFHTMWHVTRGAVLTHNGKRLEPNWASVKKDLISYGGGWRLSAQWQKGEEVQVIAVEPGKNPKNFQTMPGIFQTTTGEIGAIALDFKPGTSGSPIINREGKVVGLYGNGVVTKNGGYVSGIAQTNAEPDGPTPELEEEMFKKRNLTIMDLHPGSGKTRKYLPAIVREAIKRRLRTLILAPTRVVAAEMEEALKGLPIRYQTTATKSEHTGREIVDLMCHATFTMRLLSPVRVPNYNLIIMDEAHFTDPASIAARGYISTRVGMGEAAAIFMTATPPGTADAFPQSNAPIQDEERDIPERSWNSGNEWITDFVGKTVWFVPSIKAGNDIANCLRKNGKKVIQLSRKTFDTEYQKTKLNDWDFVVTTDISEMGANFKADRVIDPRRCLKPVILTDGPERVILAGPMPVTVASAAQRRGRVGRNPQKENDQYIFMGQPLNKDEDHAHWTEAKMLLDNINTPEGIIPALFEPEREKSAAIDGEYRLKGESRKTFVELMRRGDLPVWLAHKVASEGIKYTDRKWCFDGERNNQILEENMDVEIWTKEGEKKKLRPRWLDARTYSDPLALKEFKDFAAGRKSIALDLVTEIGRVPSHLAHRTRNALDNLVMLHTSEHGGRAYRHAVEELPETMETLLLLGLMILLTGGAMLFLISGKGIGKTSIGLICVIASSGMLWMADVPLQWIASAIVLEFFMMVLLIPEPEKQRTPQDNQLAYVVIGILTLAAIVAANEMGLLETTKRDLGMSKEPGVVSPTSYLDVDLHPASAWTLYAVATTVITPMLRHTIENSTANVSLAAIANQAVVLMGLDKGWPISKMDLGVPLLALGCYSQVNPLTLIAAVLLLVTHYAIIGPGLQAKATREAQKRTAAGIMKNPTVDGIMTIDLDPVIYDSKFEKQLGQVMLLVLCAVQLLLMRTSWALCEVLTLATGPITTLWEGSPGKFWNTTIAVSMANIFRGSYLAGAGLAFSIMKSVGTGKRGTGSQGETLGEKWKKKLNQLSRKEFDLYKKSGITEVDRTEAKEGLKRGEITHHAVSRGSAKLQWFVERNMVIPEGRVIDLGCGRGGWSYYCAGLKKVTEVRGYTKGGPGHEEPVPMSTYGWNIVKLMSGKDVFYLPPEKCDTLLCDIGESSPSPTVEESRTIRVLKMVEPWLKNNQFCIKVLNPYMPTVIEHLERLQRKHGGMLVRNPLSRNSTHEMYWISNGTGNIVSSVNMVSRLLLNRFTMTHRRPTIEKDVDLGAGTRHVNAEPETPNMDVIGERIKRIKEEHSSTWHYDDENPYKTWAYHGSYEVKATGSASSMINGVVKLLTKPWDVVPMVTQMAMTDTTPFGQQRVFKEKVDTRTPRPMPGTRKVMEITAEWLWRTLGRNKRPRLCTREEFTKKVRTNAAMGAVFTEENQWDSARAAVEDEEFWKLVDRERELHKLGKCGSCVYNMMGKREKKLGEFGKAKGSRAIWYMWLGARYLEFEALGFLNEDHWFSRENSYSGVEGEGLHKLGYILRDISKIPGGAMYADDTAGWDTRITEDDLHNEEKITQQMDPEHRQLANAIFKLTYQNKVVKVQRPTPKGTVMDIISRKDQRGSGQVGTYGLNTFTNMEAQLIRQMEGEGVLSKADLENPHPLEKKITQWLETKGVERLKRMAISGDDCVVKPIDDRFANALLALNDMGKVRKDIPQWQPSKGWHDWQQVPFCSHHFHELIMKDGRKLVVPCRPQDELIGRARISQGAGWSLRETACLGKAYAQMWTLMYFHRRDLRLASNAICSAVPVHWVPTSRTTWSIHAHHQWMTTEDMLTVWNRVWIEDNPWMEDKTPITTWEDVPYLGKREDQWCGSLIGLTSRATWAQNILTAIQQVRSLIGNEEFLDYMPSMKRFRKEEESEGAIW.

The interaction with host EXOC1 stretch occupies residues 1–15 (MNNQRKKTGKPSINM). Over 1–100 (MNNQRKKTGK…MLSIINKRKK (100 aa)) the chain is Cytoplasmic. Positions 37–72 (LLNGQGPMKLVMAFIAFLRFLAIPPTAGVLARWGTF) are hydrophobic; homodimerization of capsid protein C. The propeptide at 101–114 (TSLCLMMMLPATLA) is ER anchor for the capsid protein C, removed in mature form by serine protease NS3. A helical transmembrane segment spans residues 101–118 (TSLCLMMMLPATLAFHLT). Topologically, residues 119-243 (SRDGEPRMIV…VEKVETWALR (125 aa)) are extracellular. The N-linked (GlcNAc...) asparagine; by host glycan is linked to N183. A helical transmembrane segment spans residues 244-264 (HPGFTILALFLAHYIGTSLTQ). Position 265 (K265) is a topological domain, cytoplasmic. Residues 266 to 280 (VVIFILLMLVTPSMT) traverse the membrane as a helical segment. Residues 281–723 (MRCVGVGNRD…VHQIFGSAYT (443 aa)) lie on the Extracellular side of the membrane. 4 cysteine pairs are disulfide-bonded: C283–C310, C340–C401, C354–C385, and C372–C396. An N-linked (GlcNAc...) asparagine; by host glycan is attached at N347. Residues 378–391 (DRGWGNGCGLFGKG) are fusion peptide. An N-linked (GlcNAc...) asparagine; by host glycan is attached at N433. Cystine bridges form between C463/C563 and C580/C611. The chain crosses the membrane as a helical span at residues 724 to 744 (ALFSGVSWIMKIGIGVLLTWI). At 745 to 750 (GLNSKN) the chain is on the cytoplasmic side. A helical membrane pass occupies residues 751-771 (TSMSFSCIAIGIITLYLGVVV). The Extracellular portion of the chain corresponds to 772–1193 (QADMGCVINW…MIGSNASDRM (422 aa)). Cystine bridges form between C777–C788, C828–C916, C952–C996, C1053–C1102, C1064–C1086, and C1085–C1089. Residues N903 and N980 are each glycosylated (N-linked (GlcNAc...) asparagine; by host). N-linked (GlcNAc...) asparagine; by host glycans are attached at residues N1132 and N1188. Residues 1194–1218 (GMGVTYLALIATFKIQPFLALGFFL) form a helical membrane-spanning segment. Residues 1219–1224 (RKLTSR) lie on the Cytoplasmic side of the membrane. Residues 1225 to 1243 (ENLLLGVGLAMAATLRLPE) form a helical membrane-spanning segment. At 1244 to 1267 (DIEQMANGIALGLMALKLITQFET) the chain is on the lumenal side. A helical transmembrane segment spans residues 1268–1288 (YQLWTALVSLTCSNTIFTLTV). Residue A1289 is a topological domain, cytoplasmic. The helical transmembrane segment at 1290–1308 (WRTATLILAGISLLPVCQS) threads the bilayer. Residues 1309–1315 (SSMRKTD) are Lumenal-facing. The helical transmembrane segment at 1316-1336 (WLPMTVAAMGVPPLPLFIFSL) threads the bilayer. Over 1337 to 1344 (KDTLKRRS) the chain is Cytoplasmic. Residues 1345–1365 (WPLNEGVMAVGLVSILASSLL) form a helical membrane-spanning segment. The Lumenal segment spans residues 1366–1368 (RND). A helical membrane pass occupies residues 1369-1389 (VPMAGPLVAGGLLIACYVITG). At 1390-1443 (TSADLTVEKAADVTWEEEAEQTGVSHNLMITVDDDGTMRIKDDETENILTVLLK) the chain is on the cytoplasmic side. Positions 1396–1435 (VEKAADVTWEEEAEQTGVSHNLMITVDDDGTMRIKDDETE) are interacts with and activates NS3 protease. Positions 1444–1464 (TALLIVSGIFPCSIPATLLVW) form an intramembrane region, helical. Topologically, residues 1465-2146 (HTWQKQTQRS…VEELPETMET (682 aa)) are cytoplasmic. Residues 1474-1651 (SGVLWDVPSP…NAEPDGPTPE (178 aa)) form the Peptidase S7 domain. Active-site charge relay system; for serine protease NS3 activity residues include H1524, D1548, and S1608. The 157-residue stretch at 1654–1810 (EEMFKKRNLT…QSNAPIQDEE (157 aa)) folds into the Helicase ATP-binding domain. Residues 1658–1661 (KKRN) form an important for RNA-binding region. 1667-1674 (LHPGSGKT) contributes to the ATP binding site. Positions 1758-1761 (DEAH) match the DEAH box motif. Residues 1821 to 1986 (GNEWITDFVG…GIIPALFEPE (166 aa)) form the Helicase C-terminal domain. K1862 carries the post-translational modification N6-acetyllysine; by host. Residues 2147–2167 (LLLLGLMILLTGGAMLFLISG) traverse the membrane as a helical segment. Topologically, residues 2168–2169 (KG) are lumenal. The helical intramembrane region spans 2170–2190 (IGKTSIGLICVIASSGMLWMA). Position 2191 (D2191) is a topological domain, lumenal. The chain crosses the membrane as a helical span at residues 2192–2212 (VPLQWIASAIVLEFFMMVLLI). Residues 2213–2227 (PEPEKQRTPQDNQLA) lie on the Cytoplasmic side of the membrane. The chain crosses the membrane as a helical span at residues 2228–2248 (YVVIGILTLAAIVAANEMGLL). Over 2249–2273 (ETTKRDLGMSKEPGVVSPTSYLDVD) the chain is Lumenal. The helical intramembrane region spans 2274–2294 (LHPASAWTLYAVATTVITPML). Residues 2295–2305 (RHTIENSTANV) lie on the Lumenal side of the membrane. Residues N2300 and N2304 are each glycosylated (N-linked (GlcNAc...) asparagine; by host). The segment at residues 2306 to 2326 (SLAAIANQAVVLMGLDKGWPI) is an intramembrane region (helical). Residues 2327 to 2346 (SKMDLGVPLLALGCYSQVNP) are Lumenal-facing. A helical membrane pass occupies residues 2347–2367 (LTLIAAVLLLVTHYAIIGPGL). Topologically, residues 2368–2412 (QAKATREAQKRTAAGIMKNPTVDGIMTIDLDPVIYDSKFEKQLGQ) are cytoplasmic. Residues 2413–2433 (VMLLVLCAVQLLLMRTSWALC) traverse the membrane as a helical segment. The Lumenal portion of the chain corresponds to 2434–2458 (EVLTLATGPITTLWEGSPGKFWNTT). The N-linked (GlcNAc...) asparagine; by host glycan is linked to N2456. The helical transmembrane segment at 2459–2479 (IAVSMANIFRGSYLAGAGLAF) threads the bilayer. The Cytoplasmic segment spans residues 2480 to 3390 (SIMKSVGTGK…KEEESEGAIW (911 aa)). An mRNA cap 0-1 NS5-type MT domain is found at 2492–2753 (TGSQGETLGE…DVDLGAGTRH (262 aa)). S2546 contributes to the S-adenosyl-L-methionine binding site. S2546 is modified (phosphoserine). Catalysis depends on K2551, which acts as the For 2'-O-MTase activity. Residues 2567-2570 (VIDL) carry the SUMO-interacting motif motif. S-adenosyl-L-methionine contacts are provided by G2576, W2577, T2594, K2595, D2621, and V2622. D2636 serves as the catalytic For 2'-O-MTase activity. I2637 provides a ligand contact to S-adenosyl-L-methionine. Residues K2670 and E2706 each act as for 2'-O-MTase activity in the active site. Y2708 lines the S-adenosyl-L-methionine pocket. Zn(2+)-binding residues include E2927, H2931, C2936, and C2939. A RdRp catalytic domain is found at 3018-3168 (AMYADDTAGW…PIDDRFANAL (151 aa)). Zn(2+) is bound by residues H3202, C3218, and C3337.

The protein in the N-terminal section; belongs to the class I-like SAM-binding methyltransferase superfamily. mRNA cap 0-1 NS5-type methyltransferase family. In terms of assembly, homodimer. Interacts (via N-terminus) with host EXOC1 (via C-terminus); this interaction results in EXOC1 degradation through the proteasome degradation pathway. Forms heterodimers with envelope protein E in the endoplasmic reticulum and Golgi. As to quaternary structure, homodimer; in the endoplasmic reticulum and Golgi. Interacts with protein prM. Interacts with non-structural protein 1. In terms of assembly, homodimer; Homohexamer when secreted. Interacts with envelope protein E. Interacts (via N-terminus) with serine protease NS3. As to quaternary structure, forms a heterodimer with serine protease NS3. May form homooligomers. In terms of assembly, forms a heterodimer with NS2B. Interacts with NS4B. Interacts with unphosphorylated RNA-directed RNA polymerase NS5; this interaction stimulates RNA-directed RNA polymerase NS5 guanylyltransferase activity. Interacts with host MAVS; this interaction inhibits the synthesis of IFN-beta. Interacts with host AUP1; the interaction occurs in the presence of Dengue virus NS4B and induces lipophagy which facilitates production of virus progeny particles. As to quaternary structure, interacts with serine protease NS3. In terms of assembly, homodimer. Interacts with host STAT2; this interaction inhibits the phosphorylation of the latter, and, when all viral proteins are present (polyprotein), targets STAT2 for degradation. Interacts with serine protease NS3. Post-translationally, specific enzymatic cleavages in vivo yield mature proteins. Cleavages in the lumen of endoplasmic reticulum are performed by host signal peptidase, whereas cleavages in the cytoplasmic side are performed by serine protease NS3. Signal cleavage at the 2K-4B site requires a prior NS3 protease-mediated cleavage at the 4A-2K site. In terms of processing, cleaved in post-Golgi vesicles by a host furin, releasing the mature small envelope protein M, and peptide pr. This cleavage is incomplete as up to 30% of viral particles still carry uncleaved prM. N-glycosylated. Post-translationally, N-glycosylated. The excreted form is glycosylated and this is required for efficient secretion of the protein from infected cells. In terms of processing, acetylated by host KAT5. Acetylation modulates NS3 RNA-binding and unwinding activities and plays an important positive role for viral replication. Sumoylation of RNA-directed RNA polymerase NS5 increases NS5 protein stability allowing proper viral RNA replication. Post-translationally, phosphorylated on serines residues. This phosphorylation may trigger NS5 nuclear localization.

The protein localises to the virion. It localises to the host nucleus. It is found in the host cytoplasm. Its subcellular location is the host perinuclear region. The protein resides in the secreted. The protein localises to the virion membrane. It localises to the host endoplasmic reticulum membrane. It is found in the host mitochondrion. The enzyme catalyses Selective hydrolysis of -Xaa-Xaa-|-Yaa- bonds in which each of the Xaa can be either Arg or Lys and Yaa can be either Ser or Ala.. It catalyses the reaction RNA(n) + a ribonucleoside 5'-triphosphate = RNA(n+1) + diphosphate. The catalysed reaction is a ribonucleoside 5'-triphosphate + H2O = a ribonucleoside 5'-diphosphate + phosphate + H(+). It carries out the reaction ATP + H2O = ADP + phosphate + H(+). The enzyme catalyses a 5'-end (5'-triphosphoguanosine)-ribonucleoside in mRNA + S-adenosyl-L-methionine = a 5'-end (N(7)-methyl 5'-triphosphoguanosine)-ribonucleoside in mRNA + S-adenosyl-L-homocysteine. It catalyses the reaction a 5'-end (N(7)-methyl 5'-triphosphoguanosine)-ribonucleoside in mRNA + S-adenosyl-L-methionine = a 5'-end (N(7)-methyl 5'-triphosphoguanosine)-(2'-O-methyl-ribonucleoside) in mRNA + S-adenosyl-L-homocysteine + H(+). Functionally, plays a role in virus budding by binding to the cell membrane and gathering the viral RNA into a nucleocapsid that forms the core of a mature virus particle. During virus entry, may induce genome penetration into the host cytoplasm after hemifusion induced by the surface proteins. Can migrate to the cell nucleus where it modulates host functions. Overcomes the anti-viral effects of host EXOC1 by sequestering and degrading the latter through the proteasome degradation pathway. In terms of biological role, inhibits RNA silencing by interfering with host Dicer. Prevents premature fusion activity of envelope proteins in trans-Golgi by binding to envelope protein E at pH6.0. After virion release in extracellular space, gets dissociated from E dimers. Its function is as follows. Acts as a chaperone for envelope protein E during intracellular virion assembly by masking and inactivating envelope protein E fusion peptide. prM is the only viral peptide matured by host furin in the trans-Golgi network probably to avoid catastrophic activation of the viral fusion activity in acidic Golgi compartment prior to virion release. prM-E cleavage is inefficient, and many virions are only partially matured. These uncleaved prM would play a role in immune evasion. Functionally, may play a role in virus budding. Exerts cytotoxic effects by activating a mitochondrial apoptotic pathway through M ectodomain. May display a viroporin activity. In terms of biological role, binds to host cell surface receptor and mediates fusion between viral and cellular membranes. Envelope protein is synthesized in the endoplasmic reticulum in the form of heterodimer with protein prM. They play a role in virion budding in the ER, and the newly formed immature particle is covered with 60 spikes composed of heterodimer between precursor prM and envelope protein E. The virion is transported to the Golgi apparatus where the low pH causes dissociation of PrM-E heterodimers and formation of E homodimers. prM-E cleavage is inefficient, and many virions are only partially matured. These uncleaved prM would play a role in immune evasion. Involved in immune evasion, pathogenesis and viral replication. Once cleaved off the polyprotein, is targeted to three destinations: the viral replication cycle, the plasma membrane and the extracellular compartment. Essential for viral replication. Required for formation of the replication complex and recruitment of other non-structural proteins to the ER-derived membrane structures. Excreted as a hexameric lipoparticle that plays a role against host immune response. Antagonizing the complement function. Binds to the host macrophages and dendritic cells. Inhibits signal transduction originating from Toll-like receptor 3 (TLR3). Its function is as follows. Disrupts the host endothelial glycocalyx layer of host pulmonary microvascular endothelial cells, inducing degradation of sialic acid and shedding of heparan sulfate proteoglycans. NS1 induces expression of sialidases, heparanase, and activates cathepsin L, which activates heparanase via enzymatic cleavage. These effects are probably linked to the endothelial hyperpermeability observed in severe dengue disease. Functionally, component of the viral RNA replication complex that functions in virion assembly and antagonizes the host immune response. In terms of biological role, required cofactor for the serine protease function of NS3. May have membrane-destabilizing activity and form viroporins. Displays three enzymatic activities: serine protease, NTPase and RNA helicase. NS3 serine protease, in association with NS2B, performs its autocleavage and cleaves the polyprotein at dibasic sites in the cytoplasm: C-prM, NS2A-NS2B, NS2B-NS3, NS3-NS4A, NS4A-2K and NS4B-NS5. NS3 RNA helicase binds RNA and unwinds dsRNA in the 3' to 5' direction. Its function is as follows. Regulates the ATPase activity of the NS3 helicase activity. NS4A allows NS3 helicase to conserve energy during unwinding. Plays a role in the inhibition of the host innate immune response. Interacts with host MAVS and thereby prevents the interaction between RIGI and MAVS. In turn, IFN-beta production is impaired. Interacts with host AUP1 which mediates induction of lipophagy in host cells and facilitates production of virus progeny particles. Functionally, functions as a signal peptide for NS4B and is required for the interferon antagonism activity of the latter. In terms of biological role, induces the formation of ER-derived membrane vesicles where the viral replication takes place. Inhibits interferon (IFN)-induced host STAT1 phosphorylation and nuclear translocation, thereby preventing the establishment of cellular antiviral state by blocking the IFN-alpha/beta pathway. Replicates the viral (+) and (-) RNA genome, and performs the capping of genomes in the cytoplasm. NS5 methylates viral RNA cap at guanine N-7 and ribose 2'-O positions. Besides its role in RNA genome replication, also prevents the establishment of cellular antiviral state by blocking the interferon-alpha/beta (IFN-alpha/beta) signaling pathway. Inhibits host TYK2 and STAT2 phosphorylation, thereby preventing activation of JAK-STAT signaling pathway. In Dengue virus type 3 (strain China/80-2/1980) (DENV-3), this protein is Genome polyprotein.